Reading from the N-terminus, the 250-residue chain is Flavin-dependent thymidylate synthase (250 aa).

Residues 7–233 (LSVELIACSS…PTVFGDFEIE (227 aa)) enclose the ThyX domain. Residues 92–95 (ELVR), 103–107 (QLSQR), and arginine 172 contribute to the dUMP site. Residues 95–97 (RHR) and glutamine 103 each bind FAD. The ThyX motif signature appears at 95–105 (RHRHFSFSQLS). FAD contacts are provided by residues 188–190 (NFR) and histidine 194. Arginine 199 contributes to the dUMP binding site. The active-site Involved in ionization of N3 of dUMP, leading to its activation is the arginine 199.

Belongs to the thymidylate synthase ThyX family. In terms of assembly, homotetramer. Requires FAD as cofactor.

It catalyses the reaction dUMP + (6R)-5,10-methylene-5,6,7,8-tetrahydrofolate + NADPH + H(+) = dTMP + (6S)-5,6,7,8-tetrahydrofolate + NADP(+). It participates in pyrimidine metabolism; dTTP biosynthesis. Its function is as follows. Catalyzes the reductive methylation of 2'-deoxyuridine-5'-monophosphate (dUMP) to 2'-deoxythymidine-5'-monophosphate (dTMP) while utilizing 5,10-methylenetetrahydrofolate (mTHF) as the methyl donor, and NADPH and FADH(2) as the reductant. This chain is Flavin-dependent thymidylate synthase, found in Corynebacterium glutamicum (strain ATCC 13032 / DSM 20300 / JCM 1318 / BCRC 11384 / CCUG 27702 / LMG 3730 / NBRC 12168 / NCIMB 10025 / NRRL B-2784 / 534).